We begin with the raw amino-acid sequence, 420 residues long: Zinc finger protein Pegasus (420 aa).

A Glycyl lysine isopeptide (Lys-Gly) (interchain with G-Cter in SUMO2) cross-link involves residue Lys5. C2H2-type zinc fingers lie at residues Leu82–His104, His110–His132, and Tyr138–His161. Residue Lys185 forms a Glycyl lysine isopeptide (Lys-Gly) (interchain with G-Cter in SUMO2) linkage. Composition is skewed to polar residues over residues Gln223–Thr236 and Leu262–Ala273. Disordered stretches follow at residues Gln223–Met247 and Leu262–Pro356. Positions Gln290 to Thr311 are enriched in low complexity. Positions Ser332 to Ser349 are enriched in polar residues. Residues His364–His387 form a C2H2-type 4; degenerate zinc finger. The C2H2-type 5 zinc finger occupies Phe393–His417.

It belongs to the Ikaros C2H2-type zinc-finger protein family. As to quaternary structure, self-associates. Interacts with other family members; IKZF1, IKZF2, IKZF3 and IKZF4.

It is found in the nucleus. Its function is as follows. Transcriptional repressor that binds the core 5'GNNTGTNG-3' DNA consensus sequence. Involved in megakaryocyte differentiation. This is Zinc finger protein Pegasus (IKZF5) from Pongo abelii (Sumatran orangutan).